The following is a 204-amino-acid chain: Demethylsterigmatocystin 6-O-methyltransferase stcP (204 aa).

S-adenosyl-L-methionine-binding positions include 48–49 (GG), Asp73, 93–94 (DF), and Arg109. His113 serves as the catalytic Proton acceptor.

Belongs to the class I-like SAM-binding methyltransferase superfamily. Cation-independent O-methyltransferase family.

It carries out the reaction 6-demethylsterigmatocystin + S-adenosyl-L-methionine = sterigmatocystin + S-adenosyl-L-homocysteine + H(+). Its pathway is mycotoxin biosynthesis; sterigmatocystin biosynthesis. Its function is as follows. Norsolorinic acid reductase; part of the gene cluster that mediates the biosynthesis of sterigmatocystin (ST), a polyketide-derived furanocoumarin which is part of the most toxic and carcinogenic compounds among the known mycotoxins. The first step in the biosynthesis of sterigmatocystin is the production of hexanoate by the fatty acid synthase (FAS) units stcJ and stcK. The polyketide backbone is assembled by the non-reducing polyketide synthase stcA by condensation of the starter hexanoyl-CoA and 7 malonyl-CoA extender units followed by cyclization and release of norsolorinic acid. Norsolorinic acid is the first stable intermediate in the biosynthesis of sterigmatocystin and is converted into averantin (AVN) by the ketoreductase stcE which reduces the hexanoate ketone to an alcohol. Averantin is then oxidized into 5'-hydroxyaverantin (HAVN) by the cytochrome P450 monooxygenase stcF. 5'-hydroxyaverantin is further converted to 5'-oxyaverantin (OAVN) by the 5'-hydroxyaverantin dehydrogenase stcG. The next step is the conversion of OAVN into averufin (AVF) which is catalyzed by a yet to be identified enzyme. The cytochrome P450 monooxygenase stcB and the flavin-binding monooxygenase stcW are both required for the conversion of averufin to 1-hydroxyversicolorone. The esterase stcI probably catalyzes the formation of versiconal hemiacetal acetate from 1-hydroxyversicolorone. The oxydoreductase stcN then probably catalyzes the biosynthetic step from versiconal to versicolorin B (VERB). The next step is performed by the versicolorin B desaturase stcL to produce versicolorin A (VERA). The ketoreductase stcU and the cytochrome P450 monooxygenase stcS are involved in the conversion of versicolorin A to demethylsterigmatocystin. The Baeyer-Villiger oxidas stcQ and the reductase stcR might be involved in the biosynthetic step from versicolorin A to demethylsterigmatocystin. The final step in the biosynthesis of sterigmatocystin is the methylation of demethylsterigmatocystin catalyzed by the methyltransferase stcP. This is Demethylsterigmatocystin 6-O-methyltransferase stcP from Emericella nidulans (strain FGSC A4 / ATCC 38163 / CBS 112.46 / NRRL 194 / M139) (Aspergillus nidulans).